Consider the following 379-residue polypeptide: Armadillo repeat-containing X-linked protein 3 (379 aa).

At 1-6 (MGYARK) the chain is on the mitochondrial intermembrane side. Mitochondrion outer membrane (MOM)-targeting sequence regions lie at residues 1 to 6 (MGYARK) and 26 to 37 (RLTRGRKQNKEK). Residues 7–29 (VGWVTAGLVIGAGACYCIYRLTR) traverse the membrane as a helical; Signal-anchor segment. At 30 to 379 (GRKQNKEKMA…AEHMFPKSQE (350 aa)) the chain is on the cytoplasmic side. Phosphoserine is present on residues Ser61, Ser67, and Ser72. Residues 89–98 (RARARARARA) are nuclear localization signal. A compositionally biased stretch (basic residues) spans 95-106 (RARATRARRAVQ). The segment at 95–116 (RARATRARRAVQKRASPNSDDT) is disordered. Residue Ser110 is modified to Phosphoserine. ARM repeat units lie at residues 111-151 (PNSD…NNAA), 153-192 (AFNR…NLSV), and 233-272 (VTNE…NLAE).

Belongs to the eutherian X-chromosome-specific Armcx family. As to quaternary structure, interacts (via ARM domain) with MIRO1, MIRO2 and TRAK2. The interaction with Miro is calcium-dependent. Interacts with SOX10.

The protein localises to the mitochondrion outer membrane. The protein resides in the cytoplasm. It localises to the nucleus. In terms of biological role, regulates mitochondrial aggregation and transport in axons in living neurons. May link mitochondria to the TRAK2-kinesin motor complex via its interaction with Miro and TRAK2. Mitochondrial distribution and dynamics is regulated through ARMCX3 protein degradation, which is promoted by PCK and negatively regulated by WNT1. Enhances the SOX10-mediated transactivation of the neuronal acetylcholine receptor subunit alpha-3 and beta-4 subunit gene promoters. The protein is Armadillo repeat-containing X-linked protein 3 (ARMCX3) of Homo sapiens (Human).